The following is a 60-amino-acid chain: Large ribosomal subunit protein bL32 (60 aa).

This sequence belongs to the bacterial ribosomal protein bL32 family.

This chain is Large ribosomal subunit protein bL32, found in Streptococcus mutans serotype c (strain ATCC 700610 / UA159).